Here is a 430-residue protein sequence, read N- to C-terminus: Asparagine--tRNA ligase (430 aa).

This sequence belongs to the class-II aminoacyl-tRNA synthetase family. In terms of assembly, homodimer.

Its subcellular location is the cytoplasm. It catalyses the reaction tRNA(Asn) + L-asparagine + ATP = L-asparaginyl-tRNA(Asn) + AMP + diphosphate + H(+). The polypeptide is Asparagine--tRNA ligase (Shouchella clausii (strain KSM-K16) (Alkalihalobacillus clausii)).